We begin with the raw amino-acid sequence, 462 residues long: Argininosuccinate lyase (462 aa).

This sequence belongs to the lyase 1 family. Argininosuccinate lyase subfamily.

It localises to the cytoplasm. It catalyses the reaction 2-(N(omega)-L-arginino)succinate = fumarate + L-arginine. It participates in amino-acid biosynthesis; L-arginine biosynthesis; L-arginine from L-ornithine and carbamoyl phosphate: step 3/3. This chain is Argininosuccinate lyase, found in Streptococcus agalactiae serotype Ia (strain ATCC 27591 / A909 / CDC SS700).